An 839-amino-acid chain; its full sequence is Probable beta-glucosidase I (839 aa).

The N-linked (GlcNAc...) asparagine glycan is linked to N197. D225 is an active-site residue. A PA14 domain is found at D395 to V555. The N-linked (GlcNAc...) asparagine glycan is linked to N620.

The protein belongs to the glycosyl hydrolase 3 family.

It localises to the secreted. It catalyses the reaction Hydrolysis of terminal, non-reducing beta-D-glucosyl residues with release of beta-D-glucose.. It participates in glycan metabolism; cellulose degradation. Beta-glucosidases are one of a number of cellulolytic enzymes involved in the degradation of cellulosic biomass. Catalyzes the last step releasing glucose from the inhibitory cellobiose. This Aspergillus oryzae (strain ATCC 42149 / RIB 40) (Yellow koji mold) protein is Probable beta-glucosidase I (bglI).